The primary structure comprises 228 residues: Cytochrome c oxidase subunit 2 (228 aa).

Over 1–26 (MATWNNLNLQNGASPLMEQIIFFHDH) the chain is Mitochondrial intermembrane. A helical membrane pass occupies residues 27-48 (TLIILIMITILVGYLMINLFFN). Over 49 to 62 (KYINRFLLEGQMIE) the chain is Mitochondrial matrix. Residues 63–82 (LIWTILPAITLIFIALPSLR) traverse the membrane as a helical segment. Residues 83–228 (LLYLLDELNN…FIKWINNYSS (146 aa)) lie on the Mitochondrial intermembrane side of the membrane. Cu cation contacts are provided by His161, Cys196, Glu198, Cys200, His204, and Met207. Glu198 lines the Mg(2+) pocket.

This sequence belongs to the cytochrome c oxidase subunit 2 family. Component of the cytochrome c oxidase (complex IV, CIV), a multisubunit enzyme composed of a catalytic core of 3 subunits and several supernumerary subunits. The complex exists as a monomer or a dimer and forms supercomplexes (SCs) in the inner mitochondrial membrane with ubiquinol-cytochrome c oxidoreductase (cytochrome b-c1 complex, complex III, CIII). The cofactor is Cu cation.

Its subcellular location is the mitochondrion inner membrane. The enzyme catalyses 4 Fe(II)-[cytochrome c] + O2 + 8 H(+)(in) = 4 Fe(III)-[cytochrome c] + 2 H2O + 4 H(+)(out). Functionally, component of the cytochrome c oxidase, the last enzyme in the mitochondrial electron transport chain which drives oxidative phosphorylation. The respiratory chain contains 3 multisubunit complexes succinate dehydrogenase (complex II, CII), ubiquinol-cytochrome c oxidoreductase (cytochrome b-c1 complex, complex III, CIII) and cytochrome c oxidase (complex IV, CIV), that cooperate to transfer electrons derived from NADH and succinate to molecular oxygen, creating an electrochemical gradient over the inner membrane that drives transmembrane transport and the ATP synthase. Cytochrome c oxidase is the component of the respiratory chain that catalyzes the reduction of oxygen to water. Electrons originating from reduced cytochrome c in the intermembrane space (IMS) are transferred via the dinuclear copper A center (CU(A)) of subunit 2 and heme A of subunit 1 to the active site in subunit 1, a binuclear center (BNC) formed by heme A3 and copper B (CU(B)). The BNC reduces molecular oxygen to 2 water molecules using 4 electrons from cytochrome c in the IMS and 4 protons from the mitochondrial matrix. The polypeptide is Cytochrome c oxidase subunit 2 (COII) (Yponomeuta malinellus (European small ermine moth)).